Reading from the N-terminus, the 152-residue chain is 3-hydroxyacyl-[acyl-carrier-protein] dehydratase FabZ (152 aa).

Histidine 58 is an active-site residue.

The protein belongs to the thioester dehydratase family. FabZ subfamily.

It is found in the cytoplasm. The enzyme catalyses a (3R)-hydroxyacyl-[ACP] = a (2E)-enoyl-[ACP] + H2O. Involved in unsaturated fatty acids biosynthesis. Catalyzes the dehydration of short chain beta-hydroxyacyl-ACPs and long chain saturated and unsaturated beta-hydroxyacyl-ACPs. The protein is 3-hydroxyacyl-[acyl-carrier-protein] dehydratase FabZ of Prochlorococcus marinus (strain MIT 9312).